A 70-amino-acid polypeptide reads, in one-letter code: MKLTCVAIVAVLLLTACQLITAEDSRGTQLHRALRKTTKLSVSTRCKGPGAKCLKTMYDCCKYSCSRGRC.

The first 22 residues, 1-22, serve as a signal peptide directing secretion; the sequence is MKLTCVAIVAVLLLTACQLITA. The propeptide occupies 23-45; sequence EDSRGTQLHRALRKTTKLSVSTR. 3 disulfides stabilise this stretch: cysteine 46–cysteine 61, cysteine 53–cysteine 65, and cysteine 60–cysteine 70.

This sequence belongs to the conotoxin O1 superfamily. In terms of tissue distribution, expressed by the venom duct.

It localises to the secreted. Omega-conotoxins act at presynaptic membranes, they bind and block voltage-gated calcium channels (Cav). The sequence is that of Omega-conotoxin-like Bu1 from Conus bullatus (Bubble cone).